We begin with the raw amino-acid sequence, 688 residues long: Chaperone protein dnaK1 (688 aa).

At Thr198 the chain carries Phosphothreonine; by autocatalysis. The span at 630–661 (DLPRDSYRERDAYNNRDYGRDYGRDYGRDSRP) shows a compositional bias: basic and acidic residues. The interval 630-688 (DLPRDSYRERDAYNNRDYGRDYGRDYGRDSRPSYDNSRPPRKSPRPSYQDNWDDDDDWL) is disordered.

The protein belongs to the heat shock protein 70 family.

Functionally, acts as a chaperone. The chain is Chaperone protein dnaK1 (dnaK1) from Nostoc sp. (strain PCC 7120 / SAG 25.82 / UTEX 2576).